The chain runs to 1018 residues: Integrator complex subunit 5 (1018 aa).

The tract at residues 1-26 (MSALCDPPGAPGPPGPAPATHGPAPL) is disordered. S2 carries the N-acetylserine modification. A compositionally biased stretch (pro residues) spans 8–17 (PGAPGPPGPA). S278 carries the post-translational modification Phosphoserine. 3 consecutive transmembrane segments (helical) span residues 533 to 553 (LATQ…PLAF), 855 to 875 (LLFE…YCSV), and 929 to 949 (VFSQ…WGFL).

It belongs to the Integrator subunit 5 family. In terms of assembly, component of the Integrator complex, composed of core subunits INTS1, INTS2, INTS3, INTS4, INTS5, INTS6, INTS7, INTS8, INTS9/RC74, INTS10, INTS11/CPSF3L, INTS12, INTS13, INTS14 and INTS15. The core complex associates with protein phosphatase 2A subunits PPP2CA and PPP2R1A, to form the Integrator-PP2A (INTAC) complex.

The protein localises to the nucleus. It localises to the cytoplasm. It is found in the nucleus membrane. In terms of biological role, component of the integrator complex, a multiprotein complex that terminates RNA polymerase II (Pol II) transcription in the promoter-proximal region of genes. The integrator complex provides a quality checkpoint during transcription elongation by driving premature transcription termination of transcripts that are unfavorably configured for transcriptional elongation: the complex terminates transcription by (1) catalyzing dephosphorylation of the C-terminal domain (CTD) of Pol II subunit POLR2A/RPB1 and SUPT5H/SPT5, (2) degrading the exiting nascent RNA transcript via endonuclease activity and (3) promoting the release of Pol II from bound DNA. The integrator complex is also involved in terminating the synthesis of non-coding Pol II transcripts, such as enhancer RNAs (eRNAs), small nuclear RNAs (snRNAs), telomerase RNAs and long non-coding RNAs (lncRNAs). Mediates recruitment of cytoplasmic dynein to the nuclear envelope, probably as component of the integrator complex. In Mus musculus (Mouse), this protein is Integrator complex subunit 5 (Ints5).